The sequence spans 65 residues: Metallothionein-3 (65 aa).

Met1 is modified (N-acetylmethionine). Positions 1 to 30 (MDPEACPCPTGGSCTCSDSCKCEGCTCASS) are beta. Residues Cys6, Cys8, Cys14, Cys16, Cys20, Cys22, Cys25, and Cys27 each coordinate a divalent metal cation. An alpha region spans residues 31 to 65 (KKSCCPAECEKCAKDCVCKGGEGAEAEEKKCGCCQ). Ser33 is subject to Phosphoserine. Residues Cys34, Cys35, Cys39, Cys42, Cys46, Cys48, Cys61, Cys63, and Cys64 each contribute to the a divalent metal cation site.

The protein belongs to the metallothionein superfamily. Type 1 family.

Binds heavy metals. Contains five zinc and one copper atoms per polypeptide chain and only a negligible amount of cadmium. This Ovis aries (Sheep) protein is Metallothionein-3 (MT3).